A 278-amino-acid chain; its full sequence is MGIRKYKPTTPGRRGSSVADFVEITRSEPEKSLVRPLSKTGGRNSSGRITTRHIGGGHKRAYRLIDFRRHDKDGVPAKVAHIEYDPNRTARIALLHYVDGEKRYIIAPAKLKQGDRIENGPEADIKPGNNLPLRNIPVGTVIHAIEIRPGGGAKIARSAGASVQLVAREGRFAQLRMPSGEIRNVDVRCRATIGEVGNAEQSNINWGKAGRMRWKGKRPTVRGVAMNPIDHPHGGGEGKTSGGRHPVSPWGQPEGRTRRPGKESDKLIVRRRRTGKKR.

Disordered stretches follow at residues 29-53 (PEKS…TTRH) and 223-278 (GVAM…GKKR). A compositionally biased stretch (basic and acidic residues) spans 255–268 (GRTRRPGKESDKLI). Positions 269 to 278 (VRRRRTGKKR) are enriched in basic residues.

This sequence belongs to the universal ribosomal protein uL2 family. As to quaternary structure, part of the 50S ribosomal subunit. Forms a bridge to the 30S subunit in the 70S ribosome.

Its function is as follows. One of the primary rRNA binding proteins. Required for association of the 30S and 50S subunits to form the 70S ribosome, for tRNA binding and peptide bond formation. It has been suggested to have peptidyltransferase activity; this is somewhat controversial. Makes several contacts with the 16S rRNA in the 70S ribosome. The sequence is that of Large ribosomal subunit protein uL2 from Kineococcus radiotolerans (strain ATCC BAA-149 / DSM 14245 / SRS30216).